Here is a 320-residue protein sequence, read N- to C-terminus: Putative cyclin-D7-1 (320 aa).

The interval 1 to 46 is disordered; the sequence is MDDDDDTSFNNSLDLYCDEDPFDSTPPPPPPPPEQQQQAGTTTPDD. The span at 24–34 shows a compositional bias: pro residues; it reads STPPPPPPPPE. The segment covering 35–44 has biased composition (low complexity); that stretch reads QQQQAGTTTP.

This sequence belongs to the cyclin family. Cyclin D subfamily.

This is Putative cyclin-D7-1 (CYCD7-1) from Oryza sativa subsp. japonica (Rice).